We begin with the raw amino-acid sequence, 315 residues long: tRNA dimethylallyltransferase (315 aa).

10 to 17 (GPTAVGKT) serves as a coordination point for ATP. Residue 12–17 (TAVGKT) participates in substrate binding. The interaction with substrate tRNA stretch occupies residues 35–38 (DSMQ).

The protein belongs to the IPP transferase family. Monomer. Requires Mg(2+) as cofactor.

It carries out the reaction adenosine(37) in tRNA + dimethylallyl diphosphate = N(6)-dimethylallyladenosine(37) in tRNA + diphosphate. Catalyzes the transfer of a dimethylallyl group onto the adenine at position 37 in tRNAs that read codons beginning with uridine, leading to the formation of N6-(dimethylallyl)adenosine (i(6)A). The polypeptide is tRNA dimethylallyltransferase (Geobacillus kaustophilus (strain HTA426)).